The following is a 100-amino-acid chain: Large ribosomal subunit protein uL23 (100 aa).

Belongs to the universal ribosomal protein uL23 family. As to quaternary structure, part of the 50S ribosomal subunit. Contacts protein L29, and trigger factor when it is bound to the ribosome.

Functionally, one of the early assembly proteins it binds 23S rRNA. One of the proteins that surrounds the polypeptide exit tunnel on the outside of the ribosome. Forms the main docking site for trigger factor binding to the ribosome. The polypeptide is Large ribosomal subunit protein uL23 (Thermotoga sp. (strain RQ2)).